Consider the following 285-residue polypeptide: Enterobactin synthase component B (285 aa).

Residues 2-213 (AIPKLQAYAL…EELLPAPIPA (212 aa)) are isochorismatase. The region spanning 209–284 (APIPASKAAL…AWWKLLSREV (76 aa)) is the Carrier domain. Mg(2+)-binding residues include D227, G242, and D244. Position 245 is an O-(pantetheine 4'-phosphoryl)serine (S245).

It in the N-terminal section; belongs to the isochorismatase family. Proteins EntB, EntD, EntE, and EntF form a multienzyme complex called enterobactin synthase. Homodimer. Also forms a specific pairwise interaction with EntC; this interaction likely facilitates substrate channeling to connect the EntB and EntC active sites. Mg(2+) is required as a cofactor. Post-translationally, 4'-phosphopantetheine is transferred from CoA to a specific serine of apo-EntB by EntD. Holo-EntB so formed is then acylated with 2,3-dihydroxybenzoate in a reaction catalyzed by EntE.

The protein localises to the cytoplasm. The enzyme catalyses 3 2,3-dihydroxybenzoate + 3 L-serine + 6 ATP = enterobactin + 6 AMP + 6 diphosphate + 4 H(+). The catalysed reaction is isochorismate + H2O = (2S,3S)-2,3-dihydroxy-2,3-dihydrobenzoate + pyruvate. It participates in siderophore biosynthesis; enterobactin biosynthesis. Involved in the biosynthesis of the siderophore enterobactin (enterochelin), which is a macrocyclic trimeric lactone of N-(2,3-dihydroxybenzoyl)-serine. The serine trilactone serves as a scaffolding for the three catechol functionalities that provide hexadentate coordination for the tightly ligated iron(3+) atoms. EntB is a bifunctional protein that serves as an isochorismate lyase and an aryl carrier protein (ArCP). Catalyzes the conversion of isochorismate to 2,3-dihydro-2,3-dihydroxybenzoate (2,3-diDHB), the precursor of 2,3-dihydroxybenzoate (DHB). In the enterobactin assembly, EntB functions as an aryl carrier protein phosphopantetheinylated near the C terminus by EntD to yield holo-EntB, which is then acylated by EntE with 2,3-dihydroxybenzoyl-AMP to form DHB-holo-EntB. Then this product will serve in the formation of the amide bond between 2,3-dihydroxybenzoate (DHB) and L-serine. The chain is Enterobactin synthase component B from Escherichia coli O157:H7.